A 102-amino-acid chain; its full sequence is Large ribosomal subunit protein bL21 (102 aa).

This sequence belongs to the bacterial ribosomal protein bL21 family. As to quaternary structure, part of the 50S ribosomal subunit. Contacts protein L20.

In terms of biological role, this protein binds to 23S rRNA in the presence of protein L20. This chain is Large ribosomal subunit protein bL21, found in Clavibacter sepedonicus (Clavibacter michiganensis subsp. sepedonicus).